The following is a 163-amino-acid chain: Photosystem II extrinsic protein V (163 aa).

An N-terminal signal peptide occupies residues 1–26; it reads MFRRLIGVVVATVLLSFQLLVGSATA. Heme c contacts are provided by Cys-63, Cys-66, His-67, and His-118.

The protein belongs to the cytochrome c family. PsbV subfamily. As to quaternary structure, PSII is composed of 1 copy each of membrane proteins PsbA, PsbB, PsbC, PsbD, PsbE, PsbF, PsbH, PsbI, PsbJ, PsbK, PsbL, PsbM, PsbT, PsbX, PsbY, PsbZ, Psb30/Ycf12, peripheral proteins PsbO, CyanoQ (PsbQ), PsbU, PsbV and a large number of cofactors. It forms dimeric complexes. Heme c is required as a cofactor.

The protein resides in the cellular thylakoid membrane. Its function is as follows. One of the extrinsic, lumenal subunits of photosystem II (PSII). PSII is a light-driven water plastoquinone oxidoreductase, using light energy to abstract electrons from H(2)O, generating a proton gradient subsequently used for ATP formation. The extrinsic proteins stabilize the structure of photosystem II oxygen-evolving complex (OEC), the ion environment of oxygen evolution and protect the OEC against heat-induced inactivation. Low-potential cytochrome c that plays a role in the OEC of PSII. The polypeptide is Photosystem II extrinsic protein V (Nostoc punctiforme (strain ATCC 29133 / PCC 73102)).